A 545-amino-acid chain; its full sequence is Vicilin Pis v 3.0101 (545 aa).

An N-terminal signal peptide occupies residues Met1–Leu25. 2 disordered regions span residues Lys62–Gly93 and Arg129–Pro154. The span at Gly82–Gly93 shows a compositional bias: basic and acidic residues. Acidic residues predominate over residues Asp136–Asn153. The Cupin type-1 2 domain maps to Thr354–Val517.

The protein belongs to the 7S seed storage protein family. Expressed in seed.

Its function is as follows. Seed storage protein. The protein is Vicilin Pis v 3.0101 of Pistacia vera (Pistachio).